Consider the following 645-residue polypeptide: Protein LHY (645 aa).

Serine 6 is modified (phosphoserine). The HTH myb-type domain maps to 19–73 (TITKQRERWTEDEHERFLEALRLYGRAWQRIEEHIGTKTAVQIRSHAQKFFTKLE). The H-T-H motif DNA-binding region spans 46–69 (WQRIEEHIGTKTAVQIRSHAQKFF). 4 disordered regions span residues 89 to 127 (IEIP…AKLV), 149 to 212 (EKTS…GTTV), 410 to 437 (QNLA…ADSK), and 458 to 500 (AQKK…TDEN). Residues 110–120 (NNGTSSSQVSS) show a composition bias toward polar residues. The segment covering 149–158 (EKTSTGKENQ) has biased composition (basic and acidic residues). Positions 159–169 (DENCSGVSTVN) are enriched in polar residues. Positions 197-207 (VPKKNKDKDGN) are enriched in basic and acidic residues. Positions 468 to 478 (SCGSNTPSGSD) are enriched in polar residues. Residues 483–498 (ALDKMEKDKEDVKETD) show a composition bias toward basic and acidic residues.

In terms of assembly, homodimer or heterodimer with CCA1. Interacts with CCA1 (via internal domain); independently of photoperiod. Functions probably as part of a large complex. Interacts with CKB1 and CKB3. Interacts with LNK1 and LNK2. In terms of processing, phosphorylated by CK2. In terms of tissue distribution, expressed in leaves, roots, stems, flowers and siliques.

The protein resides in the nucleus. Functionally, transcription factor involved in the circadian clock. Binds to the promoter region of APRR1/TOC1 and TCP21/CHE to repress their transcription. Represses both CCA1 and itself. May recognize the promoter of JMJ14 to regulates its expression during the night in a circadian manner. The protein is Protein LHY of Arabidopsis thaliana (Mouse-ear cress).